Reading from the N-terminus, the 162-residue chain is NADH-quinone oxidoreductase subunit I (162 aa).

4Fe-4S ferredoxin-type domains are found at residues 54-83 (RRYE…IESE) and 93-122 (TRYD…ETQI). [4Fe-4S] cluster-binding residues include cysteine 63, cysteine 66, cysteine 69, cysteine 73, cysteine 102, cysteine 105, cysteine 108, and cysteine 112.

It belongs to the complex I 23 kDa subunit family. As to quaternary structure, NDH-1 is composed of 14 different subunits. Subunits NuoA, H, J, K, L, M, N constitute the membrane sector of the complex. It depends on [4Fe-4S] cluster as a cofactor.

It is found in the cell inner membrane. The enzyme catalyses a quinone + NADH + 5 H(+)(in) = a quinol + NAD(+) + 4 H(+)(out). NDH-1 shuttles electrons from NADH, via FMN and iron-sulfur (Fe-S) centers, to quinones in the respiratory chain. The immediate electron acceptor for the enzyme in this species is believed to be ubiquinone. Couples the redox reaction to proton translocation (for every two electrons transferred, four hydrogen ions are translocated across the cytoplasmic membrane), and thus conserves the redox energy in a proton gradient. The chain is NADH-quinone oxidoreductase subunit I from Burkholderia thailandensis (strain ATCC 700388 / DSM 13276 / CCUG 48851 / CIP 106301 / E264).